Here is a 120-residue protein sequence, read N- to C-terminus: Large ribosomal subunit protein uL18 (120 aa).

The protein belongs to the universal ribosomal protein uL18 family. In terms of assembly, part of the 50S ribosomal subunit; part of the 5S rRNA/L5/L18/L25 subcomplex. Contacts the 5S and 23S rRNAs.

This is one of the proteins that bind and probably mediate the attachment of the 5S RNA into the large ribosomal subunit, where it forms part of the central protuberance. This Methylobacterium radiotolerans (strain ATCC 27329 / DSM 1819 / JCM 2831 / NBRC 15690 / NCIMB 10815 / 0-1) protein is Large ribosomal subunit protein uL18.